A 377-amino-acid polypeptide reads, in one-letter code: Chaperone protein DnaJ (377 aa).

Positions 5–70 (DYYEVLGVSR…DKKAAYDQFG (66 aa)) constitute a J domain. The CR-type zinc-finger motif lies at 133–211 (GLTKELRIPT…CHGDGRVEKS (79 aa)). Zn(2+) contacts are provided by C146, C149, C163, C166, C185, C188, C199, and C202. CXXCXGXG motif repeat units lie at residues 146–153 (CDLCEGSG), 163–170 (CGTCHGQG), 185–192 (CPTCHGRG), and 199–206 (CSKCHGDG).

The protein belongs to the DnaJ family. In terms of assembly, homodimer. It depends on Zn(2+) as a cofactor.

The protein localises to the cytoplasm. Participates actively in the response to hyperosmotic and heat shock by preventing the aggregation of stress-denatured proteins and by disaggregating proteins, also in an autonomous, DnaK-independent fashion. Unfolded proteins bind initially to DnaJ; upon interaction with the DnaJ-bound protein, DnaK hydrolyzes its bound ATP, resulting in the formation of a stable complex. GrpE releases ADP from DnaK; ATP binding to DnaK triggers the release of the substrate protein, thus completing the reaction cycle. Several rounds of ATP-dependent interactions between DnaJ, DnaK and GrpE are required for fully efficient folding. Also involved, together with DnaK and GrpE, in the DNA replication of plasmids through activation of initiation proteins. The polypeptide is Chaperone protein DnaJ (Shewanella baltica (strain OS195)).